The primary structure comprises 249 residues: Imidazole glycerol phosphate synthase subunit HisF (249 aa).

Active-site residues include Asp11 and Asp130.

The protein belongs to the HisA/HisF family. Heterodimer of HisH and HisF.

Its subcellular location is the cytoplasm. The enzyme catalyses 5-[(5-phospho-1-deoxy-D-ribulos-1-ylimino)methylamino]-1-(5-phospho-beta-D-ribosyl)imidazole-4-carboxamide + L-glutamine = D-erythro-1-(imidazol-4-yl)glycerol 3-phosphate + 5-amino-1-(5-phospho-beta-D-ribosyl)imidazole-4-carboxamide + L-glutamate + H(+). Its pathway is amino-acid biosynthesis; L-histidine biosynthesis; L-histidine from 5-phospho-alpha-D-ribose 1-diphosphate: step 5/9. Functionally, IGPS catalyzes the conversion of PRFAR and glutamine to IGP, AICAR and glutamate. The HisF subunit catalyzes the cyclization activity that produces IGP and AICAR from PRFAR using the ammonia provided by the HisH subunit. The polypeptide is Imidazole glycerol phosphate synthase subunit HisF (Exiguobacterium sibiricum (strain DSM 17290 / CCUG 55495 / CIP 109462 / JCM 13490 / 255-15)).